A 286-amino-acid polypeptide reads, in one-letter code: Protein PXR1 (286 aa).

The interval 1–20 is disordered; that stretch reads MGLAGTKVKQRFGLDPRNTS. In terms of domain architecture, G-patch spans 25 to 71; it reads KSRFGHRYLESMGWAPGKGLGLVEHATTTHVKVSVKDDTVGLGAKLA. Residues 148–255 form a disordered region; the sequence is EDESEVNFKS…PRKHDQISNV (108 aa). A compositionally biased stretch (basic and acidic residues) spans 168 to 198; the sequence is PSRDSTSHAKRMRGDESKKSTRDQSKQERKE. Basic residues predominate over residues 199–230; sequence KKIKTEKKEKKEKKEKKEKKEKKEKKEKKEKK.

It belongs to the PINX1 family.

It localises to the nucleus. The protein localises to the nucleolus. Involved in rRNA-processing at A0, A1 and A2 sites and negatively regulates telomerase. The polypeptide is Protein PXR1 (PXR1) (Meyerozyma guilliermondii (strain ATCC 6260 / CBS 566 / DSM 6381 / JCM 1539 / NBRC 10279 / NRRL Y-324) (Yeast)).